The following is a 282-amino-acid chain: U1 small nuclear ribonucleoprotein A (282 aa).

The residue at position 2 (Ala2) is an N-acetylalanine. The 80-residue stretch at 10-89 folds into the RRM 1 domain; the sequence is HTIYINNLNE…KPMRIQYAKT (80 aa). At Lys60 the chain carries N6-acetyllysine. The disordered stretch occupies residues 100–132; sequence TFVERDRKREKRKPKSQETPATKKAVQGGGATP. Thr131 is subject to Phosphothreonine. Residue Arg152 is modified to Omega-N-methylarginine. The region spanning 208–282 is the RRM 2 domain; that stretch reads HILFLTNLPE…NAMKISFAKK (75 aa).

The protein belongs to the RRM U1 A/B'' family. In terms of assembly, U1 snRNP is composed of the 7 core Sm proteins SNRPB, SNRPD1, SNRPD2, SNRPD3, SNRPE, SNRPF and SNRPG that assemble in a heptameric protein ring on the Sm site of the small nuclear RNA to form the core snRNP, and at least three U1 snRNP-specific proteins SNRNP70/U1-70K, SNRPA/U1-A and SNRPC/U1-C. Interacts with SFPQ; component of a snRNP-free complex with SFPQ. Interacts with IVNS1ABP (via BACK domain); the interaction is indirect.

It localises to the nucleus. Component of the spliceosomal U1 snRNP, which is essential for recognition of the pre-mRNA 5' splice-site and the subsequent assembly of the spliceosome. U1 snRNP is the first snRNP to interact with pre-mRNA. This interaction is required for the subsequent binding of U2 snRNP and the U4/U6/U5 tri-snRNP. SNRPA binds stem loop II of U1 snRNA. In a snRNP-free form (SF-A) may be involved in coupled pre-mRNA splicing and polyadenylation process. May bind preferentially to the 5'-UGCAC-3' motif on RNAs. In Homo sapiens (Human), this protein is U1 small nuclear ribonucleoprotein A (SNRPA).